We begin with the raw amino-acid sequence, 438 residues long: V-type ATP synthase beta chain (438 aa).

Belongs to the ATPase alpha/beta chains family.

Its function is as follows. Produces ATP from ADP in the presence of a proton gradient across the membrane. The V-type beta chain is a regulatory subunit. This Chlamydia trachomatis serovar A (strain ATCC VR-571B / DSM 19440 / HAR-13) protein is V-type ATP synthase beta chain.